The primary structure comprises 118 residues: Large ribosomal subunit protein uL24 (118 aa).

It belongs to the universal ribosomal protein uL24 family. In terms of assembly, part of the 50S ribosomal subunit.

One of two assembly initiator proteins, it binds directly to the 5'-end of the 23S rRNA, where it nucleates assembly of the 50S subunit. In terms of biological role, one of the proteins that surrounds the polypeptide exit tunnel on the outside of the subunit. This chain is Large ribosomal subunit protein uL24, found in Prochlorococcus marinus (strain AS9601).